A 626-amino-acid chain; its full sequence is Putative ankyrin repeat protein R837 (626 aa).

ANK repeat units lie at residues 42-72 (EYFNLIDFIIETKSMEVLKYIYQSKTNGLIR), 80-109 (TLNTSLLTSCQNGNILLVKFFIEKGANHRY), 110-139 (SEDKPLGIAAANGHSDIVEYLVNGGANIKS), 140-169 (RNNYALRFAVKNGHYNMVKFLIEQGVDITV), 171-199 (DYEVFYTSCEYGHYEIFVYLMKNINDIKK), 201-230 (NKKRLLKKAFKGGSVKIVHYIFNDILDVYR), 242-269 (KNYKLLNIIGKYGNHDILEYLHNRYQLS), 270-298 (DTNNIAQVAALYGHFRIVKFLLDKYLHEL), 299-328 (NLNQLIISACDNGSIKMVKFLIEKGIDINT), 330-358 (GNSCLSHAILSGNTDLLHYLTNIGCRLTS), 393-416 (TIMSTSMYCGIIKLVKYFVDKSSL), 417-446 (DYESYICGIISNGHVNIIKYLLNQNKITKQ), 452-479 (INNSVILTIIQYGHIDMLKYLVSLGINI), 480-509 (CINYALDRAVSYGHLNIVEYLLELGHNINE), 510-539 (FGDLPLRSATIANNINMVKYLVSQGANIYI), 540-569 (IKDNPIYLASIHGHVKLVKYFIDLGSDYHK), 570-599 (KNELPLYVAIINNNLDVVKCLVEHGCKTKT), and 601-626 (FFDPIETAMEYYNNEIVEYLQNNEIK).

In Acanthamoeba polyphaga (Amoeba), this protein is Putative ankyrin repeat protein R837.